The primary structure comprises 517 residues: Maturase K (517 aa).

It belongs to the intron maturase 2 family. MatK subfamily.

The protein localises to the plastid. Its subcellular location is the chloroplast. Its function is as follows. Usually encoded in the trnK tRNA gene intron. Probably assists in splicing its own and other chloroplast group II introns. The protein is Maturase K of Caryota mitis (Burmese fishtail palm).